The following is a 109-amino-acid chain: Small ribosomal subunit protein bS18c (109 aa).

Residues Gly-82–Phe-109 form a disordered region.

It belongs to the bacterial ribosomal protein bS18 family. Part of the 30S ribosomal subunit.

The protein resides in the plastid. The polypeptide is Small ribosomal subunit protein bS18c (Cuscuta reflexa (Southern Asian dodder)).